A 166-amino-acid chain; its full sequence is Lipoprotein signal peptidase (166 aa).

The next 4 membrane-spanning stretches (helical) occupy residues G10–T30, I32–L52, W71–L91, and F100–I120. Active-site residues include D126 and D144. A helical membrane pass occupies residues W135–I155.

Belongs to the peptidase A8 family.

The protein localises to the cell inner membrane. It carries out the reaction Release of signal peptides from bacterial membrane prolipoproteins. Hydrolyzes -Xaa-Yaa-Zaa-|-(S,diacylglyceryl)Cys-, in which Xaa is hydrophobic (preferably Leu), and Yaa (Ala or Ser) and Zaa (Gly or Ala) have small, neutral side chains.. The protein operates within protein modification; lipoprotein biosynthesis (signal peptide cleavage). This protein specifically catalyzes the removal of signal peptides from prolipoproteins. The protein is Lipoprotein signal peptidase of Burkholderia mallei (strain ATCC 23344).